A 231-amino-acid polypeptide reads, in one-letter code: MSGAVALVLAGGSGTRMGRPKQFIELLGRPALYHTLRAFQEAREVERIYAVGEEERIRDLASGCGIDKLCGCARPGESRALSARNGLLLCGEEDGVICLIHDGSRCLVTPQLIGRVVRAVEEGADGAIPAVPVPDTIKVADGERVLKTLDRSSLRAAQTPQAFRLGLLRRVFSAPEEVLREATDDASLVERAGGEVRLVPGERTNIKLTSPEDLVLAEAILAARERRGSRL.

This sequence belongs to the IspD/TarI cytidylyltransferase family. IspD subfamily.

It carries out the reaction 2-C-methyl-D-erythritol 4-phosphate + CTP + H(+) = 4-CDP-2-C-methyl-D-erythritol + diphosphate. Its pathway is isoprenoid biosynthesis; isopentenyl diphosphate biosynthesis via DXP pathway; isopentenyl diphosphate from 1-deoxy-D-xylulose 5-phosphate: step 2/6. Its function is as follows. Catalyzes the formation of 4-diphosphocytidyl-2-C-methyl-D-erythritol from CTP and 2-C-methyl-D-erythritol 4-phosphate (MEP). The chain is 2-C-methyl-D-erythritol 4-phosphate cytidylyltransferase from Rubrobacter xylanophilus (strain DSM 9941 / JCM 11954 / NBRC 16129 / PRD-1).